The sequence spans 537 residues: Phosphoenolpyruvate carboxykinase (ATP) (537 aa).

Substrate contacts are provided by Arg61, Tyr194, and Lys200. ATP contacts are provided by residues Lys200, His219, and 235 to 243; that span reads GLSGTGKTT. Mn(2+)-binding residues include Lys200 and His219. Mn(2+) is bound at residue Asp256. Residues Glu284, Arg322, and Thr448 each coordinate ATP. Arg322 is a binding site for substrate.

The protein belongs to the phosphoenolpyruvate carboxykinase (ATP) family. Requires Mn(2+) as cofactor.

The protein resides in the cytoplasm. It carries out the reaction oxaloacetate + ATP = phosphoenolpyruvate + ADP + CO2. The protein operates within carbohydrate biosynthesis; gluconeogenesis. Its function is as follows. Involved in the gluconeogenesis. Catalyzes the conversion of oxaloacetate (OAA) to phosphoenolpyruvate (PEP) through direct phosphoryl transfer between the nucleoside triphosphate and OAA. The chain is Phosphoenolpyruvate carboxykinase (ATP) from Bradyrhizobium sp. (strain ORS 278).